The primary structure comprises 1092 residues: Leukemia inhibitory factor receptor (1092 aa).

The N-terminal stretch at 1-43 (MAAYSWWRQPSWMVDNKRSRMTPNLPWLLSALTLLHLTMHANG) is a signal peptide. At 44 to 828 (LKRGVQDLKC…SMFVVTKENS (785 aa)) the chain is on the extracellular side. In terms of domain architecture, Fibronectin type-III 1 spans 45-126 (KRGVQDLKCT…QSKFTLNEKD (82 aa)). 2 disulfides stabilise this stretch: Cys53–Cys63 and Cys80–Cys88. Asn164, Asn199, Asn238, and Asn261 each carry an N-linked (GlcNAc...) asparagine glycan. 2 cysteine pairs are disulfide-bonded: Cys208–Cys265 and Cys336–Cys346. 5 consecutive Fibronectin type-III domains span residues 330 to 429 (VPQK…VAPH), 430 to 529 (DPTS…TEAT), 533 to 624 (GPDT…IPND), 622 to 714 (PNDD…IGYV), and 719 to 828 (PIVA…KENS). 6 N-linked (GlcNAc...) asparagine glycosylation sites follow: Asn385, Asn402, Asn421, Asn440, Asn453, and Asn476. Cys461 and Cys506 are oxidised to a cystine. A WSXWS motif motif is present at residues 514–518 (WSRWS). 6 N-linked (GlcNAc...) asparagine glycosylation sites follow: Asn567, Asn647, Asn658, Asn675, Asn724, and Asn782. Residues 829 to 853 (VGLIIAILIPVAVAVIVGVVTSILC) form a helical membrane-spanning segment. The Cytoplasmic segment spans residues 854-1092 (YRKREWIKET…TNFFQNKPND (239 aa)). Residues 864 to 872 (FYPDIPNPE) carry the Box 1 motif motif. 2 positions are modified to phosphoserine: Ser922 and Ser1039. The tract at residues 1009–1092 (EDTAAEDEEG…TNFFQNKPND (84 aa)) is disordered. Composition is skewed to polar residues over residues 1027-1062 (ANVN…NSRQ) and 1081-1092 (SFTNFFQNKPND).

This sequence belongs to the type I cytokine receptor family. Type 2 subfamily. As to quaternary structure, heterodimer composed of LIFR and IL6ST. The heterodimer formed by LIFR and IL6ST interacts with the complex formed by CNTF and CNTFR. Placenta, liver, kidney, heart, lung, brain, and embryos. The liver may be the primary site of synthesis of the secreted form.

Its subcellular location is the cell membrane. It is found in the secreted. Functionally, signal-transducing molecule. May have a common pathway with IL6ST. The soluble form inhibits the biological activity of LIF by blocking its binding to receptors on target cells. In Mus musculus (Mouse), this protein is Leukemia inhibitory factor receptor (Lifr).